The primary structure comprises 417 residues: Gamma-glutamyl phosphate reductase (417 aa).

The protein belongs to the gamma-glutamyl phosphate reductase family.

The protein resides in the cytoplasm. The enzyme catalyses L-glutamate 5-semialdehyde + phosphate + NADP(+) = L-glutamyl 5-phosphate + NADPH + H(+). Its pathway is amino-acid biosynthesis; L-proline biosynthesis; L-glutamate 5-semialdehyde from L-glutamate: step 2/2. Catalyzes the NADPH-dependent reduction of L-glutamate 5-phosphate into L-glutamate 5-semialdehyde and phosphate. The product spontaneously undergoes cyclization to form 1-pyrroline-5-carboxylate. The chain is Gamma-glutamyl phosphate reductase from Desulfitobacterium hafniense (strain Y51).